Consider the following 158-residue polypeptide: Phosphopantetheine adenylyltransferase (158 aa).

Position 9 (T9) interacts with substrate. ATP is bound by residues 9–10 (TF) and H17. Residues K41, L73, and R87 each contribute to the substrate site. ATP is bound by residues 88–90 (GLR), E98, and 123–129 (YAYISSS).

The protein belongs to the bacterial CoaD family. As to quaternary structure, homohexamer. The cofactor is Mg(2+).

The protein resides in the cytoplasm. It carries out the reaction (R)-4'-phosphopantetheine + ATP + H(+) = 3'-dephospho-CoA + diphosphate. It functions in the pathway cofactor biosynthesis; coenzyme A biosynthesis; CoA from (R)-pantothenate: step 4/5. Functionally, reversibly transfers an adenylyl group from ATP to 4'-phosphopantetheine, yielding dephospho-CoA (dPCoA) and pyrophosphate. The protein is Phosphopantetheine adenylyltransferase of Allochromatium vinosum (strain ATCC 17899 / DSM 180 / NBRC 103801 / NCIMB 10441 / D) (Chromatium vinosum).